Here is a 345-residue protein sequence, read N- to C-terminus: Anthranilate phosphoribosyltransferase (345 aa).

5-phospho-alpha-D-ribose 1-diphosphate-binding positions include G88, 91–92, T96, 98–101, 116–124, and S128; these read GD, NIST, and KHGNRSASG. G88 contributes to the anthranilate binding site. Residue S100 coordinates Mg(2+). Residue N119 participates in anthranilate binding. Residue R174 coordinates anthranilate. The Mg(2+) site is built by D233 and E234.

This sequence belongs to the anthranilate phosphoribosyltransferase family. Homodimer. Requires Mg(2+) as cofactor.

The catalysed reaction is N-(5-phospho-beta-D-ribosyl)anthranilate + diphosphate = 5-phospho-alpha-D-ribose 1-diphosphate + anthranilate. It participates in amino-acid biosynthesis; L-tryptophan biosynthesis; L-tryptophan from chorismate: step 2/5. Functionally, catalyzes the transfer of the phosphoribosyl group of 5-phosphorylribose-1-pyrophosphate (PRPP) to anthranilate to yield N-(5'-phosphoribosyl)-anthranilate (PRA). The chain is Anthranilate phosphoribosyltransferase from Prochlorococcus marinus (strain NATL2A).